The following is a 288-amino-acid chain: Bifunctional protein FolD (288 aa).

NADP(+) is bound by residues Gly166–Ser168 and Ile232.

This sequence belongs to the tetrahydrofolate dehydrogenase/cyclohydrolase family. Homodimer.

The catalysed reaction is (6R)-5,10-methylene-5,6,7,8-tetrahydrofolate + NADP(+) = (6R)-5,10-methenyltetrahydrofolate + NADPH. It catalyses the reaction (6R)-5,10-methenyltetrahydrofolate + H2O = (6R)-10-formyltetrahydrofolate + H(+). Its pathway is one-carbon metabolism; tetrahydrofolate interconversion. Catalyzes the oxidation of 5,10-methylenetetrahydrofolate to 5,10-methenyltetrahydrofolate and then the hydrolysis of 5,10-methenyltetrahydrofolate to 10-formyltetrahydrofolate. This Cronobacter sakazakii (strain ATCC BAA-894) (Enterobacter sakazakii) protein is Bifunctional protein FolD.